Reading from the N-terminus, the 383-residue chain is Putative F-box protein At1g77650 (383 aa).

In terms of domain architecture, F-box spans 1–47; sequence MAFLSLPSDVVEEFLFKTPIESLVLCKPTCKQLYALCNDKRFIYNHL.

This chain is Putative F-box protein At1g77650, found in Arabidopsis thaliana (Mouse-ear cress).